The primary structure comprises 37 residues: Albumin-2 (37 aa).

One copy of the Hemopexin repeat lies at 6 to 37; that stretch reads IANFSVLNXEAYLFINDKYVLLDYAPGTXNDK.

In terms of assembly, dimer. Expressed in seeds (at protein level).

It localises to the cytoplasm. The protein resides in the cytosol. Binds hemin and thiamine. In Lens culinaris (Lentil), this protein is Albumin-2.